Consider the following 455-residue polypeptide: Notoamide E oxidase notB' (455 aa).

Residues 11-31 form a helical membrane-spanning segment; the sequence is PAILSPADLTVIIVGLGIAGL. Residues E48 and G61 each contribute to the FAD site. An N-linked (GlcNAc...) asparagine glycan is attached at N75. Residue R121 participates in FAD binding. Active-site residues include R199 and Y229. Residues D324 and G337 each coordinate FAD.

This sequence belongs to the paxM FAD-dependent monooxygenase family. FAD serves as cofactor.

The protein resides in the membrane. The catalysed reaction is notoamide E + NADPH + O2 + H(+) = notoamide C + NADP(+) + H2O. It carries out the reaction notoamide E + NADPH + O2 + H(+) = notoamide D + NADP(+) + H2O. The protein operates within alkaloid biosynthesis. FAD-dependent monooxygenase; part of the gene cluster that mediates the biosynthesis of notoamide, a fungal indole alkaloid that belongs to a family of natural products containing a characteristic bicyclo[2.2.2]diazaoctane core. The first step of notoamide biosynthesis involves coupling of L-proline and L-tryptophan by the bimodular NRPS notE', to produce cyclo-L-tryptophan-L-proline called brevianamide F. The reverse prenyltransferase notF' then acts as a deoxybrevianamide E synthase and converts brevianamide F to deoxybrevianamide E via reverse prenylation at C-2 of the indole ring leading to the bicyclo[2.2.2]diazaoctane core. Deoxybrevianamide E is further hydroxylated at C-6 of the indole ring, likely catalyzed by the cytochrome P450 monooxygenase notG', to yield 6-hydroxy-deoxybrevianamide E. 6-hydroxy-deoxybrevianamide E is a specific substrate of the prenyltransferase notC' for normal prenylation at C-7 to produce 6-hydroxy-7-prenyl-deoxybrevianamide, also called notoamide S. As the proposed pivotal branching point in notoamide biosynthesis, notoamide S can be diverted to notoamide E through an oxidative pyran ring closure putatively catalyzed by either notH' cytochrome P450 monooxygenase or the notD' FAD-linked oxidoreductase. This step would be followed by an indole 2,3-epoxidation-initiated pinacol-like rearrangement catalyzed by the notB' FAD-dependent monooxygenase leading to the formation of notoamide C and notoamide D. On the other hand notoamide S is converted to notoamide T by notH' (or notD'), a bifunctional oxidase that also functions as the intramolecular Diels-Alderase responsible for generation of (-)-notoamide T. To generate antipodal (+)-notoaminide T, notH (or notD) in Aspergillus strain MF297-2 is expected to catalyze a Diels-Alder reaction leading to the opposite stereochemistry. The remaining oxidoreductase notD' (or notH') likely catalyzes the oxidative pyran ring formation to yield (-)-stephacidin A. The FAD-dependent monooxygenase notI' is highly similar to notB' and is predicted to catalyze a similar conversion from (-)-stephacidin A to (+)-notoamide B via the 2,3-epoxidation of (-)-stephacidin A followed by a pinacol-type rearrangement. Finally, it remains unclear which enzyme could be responsible for the final hydroxylation steps leading to notoamide A and sclerotiamide. This chain is Notoamide E oxidase notB', found in Aspergillus versicolor.